Reading from the N-terminus, the 147-residue chain is uncharacterized protein (147 aa).

Residues 1-37 (MVALFKSSLGRPEQHQTPQIRISPASSNVEHSEKQPR) form a disordered region. Positions 15–29 (HQTPQIRISPASSNV) are enriched in polar residues. A Cytochrome b5 heme-binding domain is found at 71–147 (PIPVTKEELA…LKTSFVGFLV (77 aa)). Heme contacts are provided by histidine 106 and histidine 129.

The protein belongs to the cytochrome b5 family.

This is an uncharacterized protein from Schizosaccharomyces pombe (strain 972 / ATCC 24843) (Fission yeast).